Here is a 235-residue protein sequence, read N- to C-terminus: Large ribosomal subunit protein bL25 (235 aa).

The disordered stretch occupies residues 201–235 (PVAEAKGKGKAAKPAATAKPAAAAAKPAAKPKAKK). Positions 212–228 (AKPAATAKPAAAAAKPA) are enriched in low complexity.

Belongs to the bacterial ribosomal protein bL25 family. CTC subfamily. In terms of assembly, part of the 50S ribosomal subunit; part of the 5S rRNA/L5/L18/L25 subcomplex. Contacts the 5S rRNA. Binds to the 5S rRNA independently of L5 and L18.

This is one of the proteins that binds to the 5S RNA in the ribosome where it forms part of the central protuberance. In Verminephrobacter eiseniae (strain EF01-2), this protein is Large ribosomal subunit protein bL25.